A 151-amino-acid chain; its full sequence is MFRGANAISLDAKGRLAMPSRYRDELVSRSSGQLIVTIDAVDPCLCVYPLDEWELIETKLRALPSLREENRRLQRLLIGNAVDLELDGSGRFLVPPRLREYAKLDKRAMLVGQLNKFQLWDEDAWNAVSAADLAAIQQPGAMPDELRDLIL.

2 consecutive SpoVT-AbrB domains span residues 5 to 52 (ANAI…PLDE) and 81 to 124 (AVDL…DEDA).

The protein belongs to the MraZ family. Forms oligomers.

Its subcellular location is the cytoplasm. The protein resides in the nucleoid. This chain is Transcriptional regulator MraZ, found in Pseudomonas fluorescens (strain ATCC BAA-477 / NRRL B-23932 / Pf-5).